The following is a 193-amino-acid chain: Ribonuclease HII (193 aa).

The region spanning Tyr-15 to Cys-193 is the RNase H type-2 domain. The a divalent metal cation site is built by Asp-21, Glu-22, and Asp-112.

Belongs to the RNase HII family. The cofactor is Mn(2+). Requires Mg(2+) as cofactor.

Its subcellular location is the cytoplasm. The enzyme catalyses Endonucleolytic cleavage to 5'-phosphomonoester.. Endonuclease that specifically degrades the RNA of RNA-DNA hybrids. This is Ribonuclease HII from Rickettsia akari (strain Hartford).